A 156-amino-acid polypeptide reads, in one-letter code: SsrA-binding protein (156 aa).

Residues 135–150 are compositionally biased toward basic and acidic residues; the sequence is KRDTIKDREWQRDRSR. The segment at 135–156 is disordered; it reads KRDTIKDREWQRDRSRIMKKNT.

It belongs to the SmpB family.

The protein resides in the cytoplasm. In terms of biological role, required for rescue of stalled ribosomes mediated by trans-translation. Binds to transfer-messenger RNA (tmRNA), required for stable association of tmRNA with ribosomes. tmRNA and SmpB together mimic tRNA shape, replacing the anticodon stem-loop with SmpB. tmRNA is encoded by the ssrA gene; the 2 termini fold to resemble tRNA(Ala) and it encodes a 'tag peptide', a short internal open reading frame. During trans-translation Ala-aminoacylated tmRNA acts like a tRNA, entering the A-site of stalled ribosomes, displacing the stalled mRNA. The ribosome then switches to translate the ORF on the tmRNA; the nascent peptide is terminated with the 'tag peptide' encoded by the tmRNA and targeted for degradation. The ribosome is freed to recommence translation, which seems to be the essential function of trans-translation. This chain is SsrA-binding protein, found in Legionella pneumophila (strain Corby).